We begin with the raw amino-acid sequence, 327 residues long: Cytochrome f (327 aa).

The N-terminal stretch at 1–24 (MKRIYLALCALLLLLGTGSRPAAA) is a signal peptide. The heme site is built by Tyr25, Cys45, Cys48, and His49. Residues 293-313 (VKWLVAFLAAVAITQLLLVLK) form a helical membrane-spanning segment.

Belongs to the cytochrome f family. The 4 large subunits of the cytochrome b6-f complex are cytochrome b6, subunit IV (17 kDa polypeptide, PetD), cytochrome f and the Rieske protein, while the 4 small subunits are PetG, PetL, PetM and PetN. The complex functions as a dimer. Heme is required as a cofactor.

The protein localises to the cellular thylakoid membrane. Its function is as follows. Component of the cytochrome b6-f complex, which mediates electron transfer between photosystem II (PSII) and photosystem I (PSI), cyclic electron flow around PSI, and state transitions. The sequence is that of Cytochrome f from Synechococcus sp. (strain JA-3-3Ab) (Cyanobacteria bacterium Yellowstone A-Prime).